Consider the following 232-residue polypeptide: Syntaxin-51 (232 aa).

Residues 1-208 (MASSSDSWMR…NKNMRSGCSC (208 aa)) lie on the Cytoplasmic side of the membrane. One can recognise a t-SNARE coiled-coil homology domain in the interval 136–198 (RQVMREQDEG…RRVQKSLAVM (63 aa)). A helical; Anchor for type IV membrane protein transmembrane segment spans residues 209 to 229 (MSMLLSVLGIVGLAVVIWMLV). The Vesicular segment spans residues 230 to 232 (KYM).

The protein belongs to the syntaxin family. Interacts with VTI11 and either SYP21, or SYP22, or SYP61 in the prevacuolar compartment, or with VTI12 and SYP61 in the trans-Golgi network to form t-SNARE complexes. As to expression, expressed in root, leaf, stem, flower and silique.

The protein resides in the golgi apparatus. It localises to the trans-Golgi network membrane. The protein localises to the prevacuolar compartment membrane. Functionally, vesicle trafficking protein that functions in the secretory pathway. In Arabidopsis thaliana (Mouse-ear cress), this protein is Syntaxin-51 (SYP51).